Consider the following 228-residue polypeptide: ATP-dependent dethiobiotin synthetase BioD (228 aa).

13–18 is an ATP binding site; sequence DIGKTF. Mg(2+) is bound at residue Thr-17. Lys-38 is a catalytic residue. Substrate is bound at residue Ser-42. ATP contacts are provided by residues Asp-55, 116 to 119, 179 to 180, and 208 to 210; these read EGSG, NK, and PKI. Mg(2+)-binding residues include Asp-55 and Glu-116.

This sequence belongs to the dethiobiotin synthetase family. Homodimer. Mg(2+) is required as a cofactor.

The protein resides in the cytoplasm. The catalysed reaction is (7R,8S)-7,8-diammoniononanoate + CO2 + ATP = (4R,5S)-dethiobiotin + ADP + phosphate + 3 H(+). It functions in the pathway cofactor biosynthesis; biotin biosynthesis; biotin from 7,8-diaminononanoate: step 1/2. In terms of biological role, catalyzes a mechanistically unusual reaction, the ATP-dependent insertion of CO2 between the N7 and N8 nitrogen atoms of 7,8-diaminopelargonic acid (DAPA, also called 7,8-diammoniononanoate) to form a ureido ring. This Clostridium perfringens (strain 13 / Type A) protein is ATP-dependent dethiobiotin synthetase BioD.